A 159-amino-acid chain; its full sequence is Growth arrest and DNA damage-inducible protein GADD45 gamma (159 aa).

The homodimerization stretch occupies residues 43–86 (VYESAKVLNVDPDNVTFCVLAAGEEDEGDIALQIHFTLIQAFCC).

This sequence belongs to the GADD45 family. As to quaternary structure, undergoes concentration-dependent homodimerization, which is required for growth inhibititory activity and enhances interaction with PCNA. Interacts with GADD45GIP1. Interacts with PCNA.

Its function is as follows. Involved in the regulation of growth and apoptosis. Mediates activation of stress-responsive MTK1/MEKK4 MAPKKK. This Homo sapiens (Human) protein is Growth arrest and DNA damage-inducible protein GADD45 gamma (GADD45G).